The primary structure comprises 79 residues: Sec-independent protein translocase protein TatA (79 aa).

A helical transmembrane segment spans residues 1 to 21 (MGGFTSIWHWVIVLLVIVLLF). A disordered region spans residues 48 to 79 (EEEAKNEPKTLDAQATQTKAHESSEIKSKQES). The span at 66 to 79 (KAHESSEIKSKQES) shows a compositional bias: basic and acidic residues.

This sequence belongs to the TatA/E family. In terms of assembly, the Tat system comprises two distinct complexes: a TatABC complex, containing multiple copies of TatA, TatB and TatC subunits, and a separate TatA complex, containing only TatA subunits. Substrates initially bind to the TatABC complex, which probably triggers association of the separate TatA complex to form the active translocon.

Its subcellular location is the cell inner membrane. In terms of biological role, part of the twin-arginine translocation (Tat) system that transports large folded proteins containing a characteristic twin-arginine motif in their signal peptide across membranes. TatA could form the protein-conducting channel of the Tat system. The polypeptide is Sec-independent protein translocase protein TatA (Helicobacter pylori (strain P12)).